Consider the following 779-residue polypeptide: Ribonucleoside-diphosphate reductase large subunit (779 aa).

Residues serine 178, serine 193–cysteine 194, glycine 222, asparagine 420–glutamate 424, and proline 614–serine 618 each bind substrate. Cysteine 194 and cysteine 440 are disulfide-bonded. The active-site Proton acceptor is the asparagine 420. Catalysis depends on cysteine 422, which acts as the Cysteine radical intermediate. The active-site Proton acceptor is glutamate 424.

The protein belongs to the ribonucleoside diphosphate reductase large chain family. Heterotetramer composed of a homodimer of the large subunit (R1) and a homodimer of the small subunit (R2). Larger multisubunit protein complex are also active, composed of (R1)n(R2)n.

The catalysed reaction is a 2'-deoxyribonucleoside 5'-diphosphate + [thioredoxin]-disulfide + H2O = a ribonucleoside 5'-diphosphate + [thioredoxin]-dithiol. Under complex allosteric control mediated by deoxynucleoside triphosphates and ATP binding. The type of nucleotide bound at the specificity site determines substrate preference. It seems probable that ATP makes the enzyme reduce CDP and UDP, dGTP favors ADP reduction and dTTP favors GDP reduction. In terms of biological role, ribonucleoside-diphosphate reductase holoenzyme provides the precursors necessary for viral DNA synthesis. Allows virus growth in non-dividing cells. Catalyzes the biosynthesis of deoxyribonucleotides from the corresponding ribonucleotides. The protein is Ribonucleoside-diphosphate reductase large subunit of African swine fever virus (isolate Tick/Malawi/Lil 20-1/1983) (ASFV).